A 236-amino-acid chain; its full sequence is DNA repair protein RecO (236 aa).

It belongs to the RecO family.

In terms of biological role, involved in DNA repair and RecF pathway recombination. This chain is DNA repair protein RecO, found in Stutzerimonas stutzeri (strain A1501) (Pseudomonas stutzeri).